Consider the following 594-residue polypeptide: Nucleolar protein 56 (594 aa).

Residues lysine 87, lysine 230, and lysine 240 each participate in a glycyl lysine isopeptide (Lys-Gly) (interchain with G-Cter in SUMO2) cross-link. One can recognise a Nop domain in the interval 292–410 (VAPSLSALIG…VEERLSFYET (119 aa)). Serine 314 is subject to Phosphoserine. Residue arginine 359 is modified to Omega-N-methylarginine. 2 stretches are compositionally biased toward low complexity: residues 458–469 (ALASSENSSSTP) and 488–504 (QEVP…ISFS). The tract at residues 458–594 (ALASSENSSS…KKFHKASQED (137 aa)) is disordered. Phosphoserine is present on residues serine 466 and serine 467. The residue at position 468 (threonine 468) is a Phosphothreonine. A phosphoserine mark is found at serine 511, serine 519, serine 520, and serine 537. Lysine 540 participates in a covalent cross-link: Glycyl lysine isopeptide (Lys-Gly) (interchain with G-Cter in SUMO2). An N6-acetyllysine modification is found at lysine 561. Residue serine 563 is modified to Phosphoserine. Lysine 564 is covalently cross-linked (Glycyl lysine isopeptide (Lys-Gly) (interchain with G-Cter in SUMO2)). 4 positions are modified to phosphoserine: serine 569, serine 570, serine 579, and serine 581. Residues 580–594 (SSKKKKKFHKASQED) are compositionally biased toward basic residues.

It belongs to the NOP5/NOP56 family. In terms of assembly, part of a large pre-ribosomal ribonucleoprotein (RNP) complex, that consists of at least 62 ribosomal proteins, 45 nonribosomal proteins and both pre-rRNA and mature rRNA species. Within this complex directly interacts with TCOF1 in an RNA-independent manner. Core component of box C/D small nucleolar ribonucleoprotein (snoRNP) particles; the core proteins SNU13, NOP56, NOP58 and FBL or FBLL1 assemble stepwise onto the snoRNA. Interacts with NOP1 and NOP58. Interacts with NUFIP1, RUVBL1 and RUVBL2; RUVBL1:RUVBL2 seem to bridge the association of NOP56 with NUFIP1. Part of the small subunit (SSU) processome, composed of more than 70 proteins and the RNA chaperone small nucleolar RNA (snoRNA) U3. Interacts with NOP2 and FBL.

It is found in the nucleus. The protein localises to the nucleolus. It localises to the cytoplasm. The protein resides in the nucleoplasm. Its function is as follows. Involved in the early to middle stages of 60S ribosomal subunit biogenesis. Required for the biogenesis of box C/D snoRNAs such U3, U8 and U14 snoRNAs. Part of the small subunit (SSU) processome, first precursor of the small eukaryotic ribosomal subunit. During the assembly of the SSU processome in the nucleolus, many ribosome biogenesis factors, an RNA chaperone and ribosomal proteins associate with the nascent pre-rRNA and work in concert to generate RNA folding, modifications, rearrangements and cleavage as well as targeted degradation of pre-ribosomal RNA by the RNA exosome. Core component of box C/D small nucleolar ribonucleoprotein (snoRNP) complexes that function in methylation of multiple sites on ribosomal RNAs (rRNAs) and messenger RNAs (mRNAs). The chain is Nucleolar protein 56 from Homo sapiens (Human).